Here is a 499-residue protein sequence, read N- to C-terminus: ATP synthase subunit beta, chloroplastic (499 aa).

Residue 170–177 (GGAGVGKT) coordinates ATP.

The protein belongs to the ATPase alpha/beta chains family. As to quaternary structure, F-type ATPases have 2 components, CF(1) - the catalytic core - and CF(0) - the membrane proton channel. CF(1) has five subunits: alpha(3), beta(3), gamma(1), delta(1), epsilon(1). CF(0) has four main subunits: a(1), b(1), b'(1) and c(9-12).

It is found in the plastid. The protein localises to the chloroplast thylakoid membrane. It catalyses the reaction ATP + H2O + 4 H(+)(in) = ADP + phosphate + 5 H(+)(out). Its function is as follows. Produces ATP from ADP in the presence of a proton gradient across the membrane. The catalytic sites are hosted primarily by the beta subunits. The protein is ATP synthase subunit beta, chloroplastic of Ipomoea purpurea (Common morning glory).